Here is a 188-residue protein sequence, read N- to C-terminus: Large ribosomal subunit protein eL18B (188 aa).

The segment at 153–188 (GKAPGTPHSRTKPYVLSKGRKFERARGRRASRGYKN) is disordered. Basic residues predominate over residues 178 to 188 (RGRRASRGYKN).

Belongs to the eukaryotic ribosomal protein eL18 family. In terms of assembly, component of the large ribosomal subunit.

Its subcellular location is the cytoplasm. The protein resides in the cytosol. The protein localises to the rough endoplasmic reticulum. In terms of biological role, component of the large ribosomal subunit. The ribosome is a large ribonucleoprotein complex responsible for the synthesis of proteins in the cell. The protein is Large ribosomal subunit protein eL18B (rpl18-b) of Xenopus laevis (African clawed frog).